A 524-amino-acid polypeptide reads, in one-letter code: Ribosomal protein uS12 methylthiotransferase RimO (524 aa).

The segment covering asparagine 20–alanine 31 has biased composition (polar residues). The interval asparagine 20–leucine 59 is disordered. The segment covering glutamate 48–serine 58 has biased composition (low complexity). Residues proline 67–proline 177 enclose the MTTase N-terminal domain. The [4Fe-4S] cluster site is built by cysteine 76, cysteine 112, cysteine 141, cysteine 216, cysteine 220, and cysteine 223. The region spanning leucine 202–glutamine 443 is the Radical SAM core domain. The TRAM domain occupies glutamine 446–alanine 519.

Belongs to the methylthiotransferase family. RimO subfamily. [4Fe-4S] cluster is required as a cofactor.

The protein resides in the cytoplasm. The catalysed reaction is L-aspartate(89)-[ribosomal protein uS12]-hydrogen + (sulfur carrier)-SH + AH2 + 2 S-adenosyl-L-methionine = 3-methylsulfanyl-L-aspartate(89)-[ribosomal protein uS12]-hydrogen + (sulfur carrier)-H + 5'-deoxyadenosine + L-methionine + A + S-adenosyl-L-homocysteine + 2 H(+). In terms of biological role, catalyzes the methylthiolation of an aspartic acid residue of ribosomal protein uS12. This is Ribosomal protein uS12 methylthiotransferase RimO from Psychrobacter sp. (strain PRwf-1).